The following is a 178-amino-acid chain: ATP synthase subunit delta (178 aa).

This sequence belongs to the ATPase delta chain family. F-type ATPases have 2 components, F(1) - the catalytic core - and F(0) - the membrane proton channel. F(1) has five subunits: alpha(3), beta(3), gamma(1), delta(1), epsilon(1). F(0) has three main subunits: a(1), b(2) and c(10-14). The alpha and beta chains form an alternating ring which encloses part of the gamma chain. F(1) is attached to F(0) by a central stalk formed by the gamma and epsilon chains, while a peripheral stalk is formed by the delta and b chains.

It localises to the cell membrane. Its function is as follows. F(1)F(0) ATP synthase produces ATP from ADP in the presence of a proton or sodium gradient. F-type ATPases consist of two structural domains, F(1) containing the extramembraneous catalytic core and F(0) containing the membrane proton channel, linked together by a central stalk and a peripheral stalk. During catalysis, ATP synthesis in the catalytic domain of F(1) is coupled via a rotary mechanism of the central stalk subunits to proton translocation. This protein is part of the stalk that links CF(0) to CF(1). It either transmits conformational changes from CF(0) to CF(1) or is implicated in proton conduction. This chain is ATP synthase subunit delta, found in Streptococcus pyogenes serotype M3 (strain SSI-1).